We begin with the raw amino-acid sequence, 154 residues long: Large ribosomal subunit protein uL13 (154 aa).

The interval 132-154 (PHEAQQPETLDVGAMNRKNKRAA) is disordered.

This sequence belongs to the universal ribosomal protein uL13 family. In terms of assembly, part of the 50S ribosomal subunit.

In terms of biological role, this protein is one of the early assembly proteins of the 50S ribosomal subunit, although it is not seen to bind rRNA by itself. It is important during the early stages of 50S assembly. The polypeptide is Large ribosomal subunit protein uL13 (Rhodopseudomonas palustris (strain HaA2)).